Reading from the N-terminus, the 154-residue chain is Large ribosomal subunit protein bL9c (154 aa).

It belongs to the bacterial ribosomal protein bL9 family.

Its subcellular location is the plastid. It localises to the chloroplast. Binds to the 23S rRNA. The protein is Large ribosomal subunit protein bL9c of Gracilaria tenuistipitata var. liui (Red alga).